The chain runs to 602 residues: uncharacterized protein (602 aa).

Asparagine 305, asparagine 497, and asparagine 577 each carry an N-linked (GlcNAc...) asparagine glycan.

In terms of processing, N-glycosylated.

It localises to the vacuole. This is an uncharacterized protein from Saccharomyces cerevisiae (strain ATCC 204508 / S288c) (Baker's yeast).